We begin with the raw amino-acid sequence, 373 residues long: Protodeoxyviolaceinate monooxygenase (373 aa).

Residue 2-20 (KILVIGAGPAGLVFASQLK) coordinates FAD.

FAD serves as cofactor.

It catalyses the reaction protodeoxyviolaceinate + NADH + O2 + H(+) = protoviolaceinate + NAD(+) + H2O. The catalysed reaction is protodeoxyviolaceinate + NADPH + O2 + H(+) = protoviolaceinate + NADP(+) + H2O. The protein operates within pigment biosynthesis; violacein biosynthesis. Catalyzes the oxygenation of the 6-position of protodeoxyviolaceinate to form proviolacein. This chain is Protodeoxyviolaceinate monooxygenase (vioD), found in Chromobacterium violaceum (strain ATCC 12472 / DSM 30191 / JCM 1249 / CCUG 213 / NBRC 12614 / NCIMB 9131 / NCTC 9757 / MK).